We begin with the raw amino-acid sequence, 185 residues long: MDPPTAGAQSLGAAEQPRGLQLPSGREAPPSPGTAFAPADHSSQEKATENATDRLANGAQSIPHDSPAHGEGTHCEEEGFAEDDEDSDGEPSPWELSEGMSGCLPKEQAGDLFHEDWDLELKADQGNPYDADDIQGCLSQEVRPWVCCAPQGDMIYDPSWHHPPPLIPHYSKMVFETGQFDDAED.

M1 carries the post-translational modification N-acetylmethionine. Positions 1–109 are disordered; it reads MDPPTAGAQS…MSGCLPKEQA (109 aa). 2 stretches are compositionally biased toward basic and acidic residues: residues 42–52 and 66–77; these read SSQEKATENAT and SPAHGEGTHCEE. S66 is modified (phosphoserine). Positions 78–89 are enriched in acidic residues; it reads EGFAEDDEDSDG.

Interacts with PRMT5. Interacts with histone H4; specifically interacts with the N-terminus of histone H4 but not with histone H3. Interacts with CBFB. Found in a complex with PRMT5, RUNX1 and CBFB.

The protein localises to the nucleus. Histone-binding protein required for histone H4 methyltransferase activity of PRMT5. Specifically required for histone H4 'Arg-3' methylation mediated by PRMT5, but not histone H3 'Arg-8' methylation, suggesting that it modulates the substrate specificity of PRMT5. Specifically interacts with the N-terminus of histone H4 but not with histone H3, suggesting that it acts by promoting the association between histone H4 and PRMT5. Involved in CCNE1 promoter repression. Plays a role in muscle cell differentiation by modulating the recruitment of PRMT5 to the promoter of genes involved in the coordination between cell cycle exit and muscle differentiation. This chain is Coordinator of PRMT5 and differentiation stimulator (COPRS), found in Bos taurus (Bovine).